The primary structure comprises 424 residues: Serine hydroxymethyltransferase (424 aa).

(6S)-5,6,7,8-tetrahydrofolate contacts are provided by residues Leu118 and 122-124 (GHL). Lys227 is subject to N6-(pyridoxal phosphate)lysine. (6S)-5,6,7,8-tetrahydrofolate contacts are provided by residues Glu243 and 351 to 353 (SPF).

It belongs to the SHMT family. Homodimer. It depends on pyridoxal 5'-phosphate as a cofactor.

Its subcellular location is the cytoplasm. It catalyses the reaction (6R)-5,10-methylene-5,6,7,8-tetrahydrofolate + glycine + H2O = (6S)-5,6,7,8-tetrahydrofolate + L-serine. It functions in the pathway one-carbon metabolism; tetrahydrofolate interconversion. The protein operates within amino-acid biosynthesis; glycine biosynthesis; glycine from L-serine: step 1/1. In terms of biological role, catalyzes the reversible interconversion of serine and glycine with tetrahydrofolate (THF) serving as the one-carbon carrier. This reaction serves as the major source of one-carbon groups required for the biosynthesis of purines, thymidylate, methionine, and other important biomolecules. Also exhibits THF-independent aldolase activity toward beta-hydroxyamino acids, producing glycine and aldehydes, via a retro-aldol mechanism. This chain is Serine hydroxymethyltransferase, found in Thermosipho africanus (strain TCF52B).